Reading from the N-terminus, the 144-residue chain is D-aminoacyl-tRNA deacylase (144 aa).

A Gly-cisPro motif, important for rejection of L-amino acids motif is present at residues 136 to 137 (GP).

Belongs to the DTD family. In terms of assembly, homodimer.

The protein localises to the cytoplasm. The enzyme catalyses glycyl-tRNA(Ala) + H2O = tRNA(Ala) + glycine + H(+). The catalysed reaction is a D-aminoacyl-tRNA + H2O = a tRNA + a D-alpha-amino acid + H(+). Its function is as follows. An aminoacyl-tRNA editing enzyme that deacylates mischarged D-aminoacyl-tRNAs. Also deacylates mischarged glycyl-tRNA(Ala), protecting cells against glycine mischarging by AlaRS. Acts via tRNA-based rather than protein-based catalysis; rejects L-amino acids rather than detecting D-amino acids in the active site. By recycling D-aminoacyl-tRNA to D-amino acids and free tRNA molecules, this enzyme counteracts the toxicity associated with the formation of D-aminoacyl-tRNA entities in vivo and helps enforce protein L-homochirality. The protein is D-aminoacyl-tRNA deacylase of Pasteurella multocida (strain Pm70).